The sequence spans 388 residues: MNSTDVTKGFTEQFGKQAEHTFFAPGRINLIGEHTDYNGGHVFPCAISLGTYAAVGTNEDNAFRLYSANFPKVGIIDIPFSDLFQDKRGLWTDYFQGMARVMKTAGANFTHGLNVYINGNLPDGAGLSSSASLEMLVGTILNSLFDGGFEPLELVQFGVKVENDYIGVNSGVMDQFAIEMGRANQATLLDTNTMKYEYLPVEMGDNVIVIMNTNKRRELADSKYNERRSECEKALAMLQKGIEVKSLGQLSEDEFDENTYLIYDPILIKRARHAVFENQRTLKASKALQDGDLKTFGKLVSASGVSLAFDYEVTGIELDTLVTNALKQRGVLGARMTGAGFGGCAIAIVNSADVEDFIDNVGKAYREKIGYDAHFYVADIADGAKQLN.

33 to 36 (EHTD) contacts substrate. ATP is bound by residues S67 and 124–130 (GAGLSSS). Mg(2+)-binding residues include S130 and E162. The active-site Proton acceptor is D174. Y224 is a binding site for substrate.

The protein belongs to the GHMP kinase family. GalK subfamily.

It is found in the cytoplasm. The enzyme catalyses alpha-D-galactose + ATP = alpha-D-galactose 1-phosphate + ADP + H(+). It functions in the pathway carbohydrate metabolism; galactose metabolism. Functionally, catalyzes the transfer of the gamma-phosphate of ATP to D-galactose to form alpha-D-galactose-1-phosphate (Gal-1-P). The sequence is that of Galactokinase from Lacticaseibacillus casei (strain BL23) (Lactobacillus casei).